Reading from the N-terminus, the 447-residue chain is Exodeoxyribonuclease 7 large subunit (447 aa).

This sequence belongs to the XseA family. In terms of assembly, heterooligomer composed of large and small subunits.

The protein localises to the cytoplasm. It catalyses the reaction Exonucleolytic cleavage in either 5'- to 3'- or 3'- to 5'-direction to yield nucleoside 5'-phosphates.. In terms of biological role, bidirectionally degrades single-stranded DNA into large acid-insoluble oligonucleotides, which are then degraded further into small acid-soluble oligonucleotides. In Lactobacillus helveticus (strain DPC 4571), this protein is Exodeoxyribonuclease 7 large subunit.